The chain runs to 115 residues: Nucleoid-associated protein Npun_F0448 (115 aa).

It belongs to the YbaB/EbfC family. Homodimer.

The protein resides in the cytoplasm. It is found in the nucleoid. Functionally, binds to DNA and alters its conformation. May be involved in regulation of gene expression, nucleoid organization and DNA protection. The sequence is that of Nucleoid-associated protein Npun_F0448 from Nostoc punctiforme (strain ATCC 29133 / PCC 73102).